A 1104-amino-acid chain; its full sequence is DNA polymerase delta catalytic subunit (1104 aa).

The segment at 1–60 (MKRSIVTGGGNNDKKFKAQPPPKNNYRGGGDDEEDDEFEEDDDEDEGDEFGEEEDEDDID) is disordered. The segment covering 31-60 (DDEEDDEFEEDDDEDEGDEFGEEEDEDDID) has biased composition (acidic residues). Zn(2+) is bound by residues Cys-1012, Cys-1015, Cys-1027, and Cys-1030. The CysA-type zinc-finger motif lies at 1012 to 1030 (CMNCPKELTDTESTTCINC). Cys-1059, Cys-1062, Cys-1072, and Cys-1077 together coordinate [4Fe-4S] cluster. The CysB motif motif lies at 1059 to 1077 (CQRCSGSLHQPVLCSNRDC).

Belongs to the DNA polymerase type-B family. As to quaternary structure, heterotetramer composed of subunits of 125 kDa, 50 kDa, 66 kDa and 12 kDa. The 125 kDa subunit contains the polymerase active site and most likely the active site for the 3'-5' exonuclease activity. Requires [4Fe-4S] cluster as cofactor.

The protein localises to the nucleus. The enzyme catalyses DNA(n) + a 2'-deoxyribonucleoside 5'-triphosphate = DNA(n+1) + diphosphate. Functionally, possesses two enzymatic activities: DNA synthesis (polymerase) and an exonucleolytic activity that degrades single stranded DNA in the 3'- to 5'-direction. This is DNA polymerase delta catalytic subunit (pold1) from Dictyostelium discoideum (Social amoeba).